The primary structure comprises 223 residues: Endonuclease V (223 aa).

Residues aspartate 35 and aspartate 103 each contribute to the Mg(2+) site.

It belongs to the endonuclease V family. Mg(2+) serves as cofactor.

The protein resides in the cytoplasm. It catalyses the reaction Endonucleolytic cleavage at apurinic or apyrimidinic sites to products with a 5'-phosphate.. Functionally, DNA repair enzyme involved in the repair of deaminated bases. Selectively cleaves double-stranded DNA at the second phosphodiester bond 3' to a deoxyinosine leaving behind the intact lesion on the nicked DNA. This Salmonella paratyphi A (strain ATCC 9150 / SARB42) protein is Endonuclease V.